The sequence spans 249 residues: MFFSAALRARAAGLTAHWGRHVRNLHKTAKQNGAGGALFVHRDTPENNPDTPFDFTPENYKRIEAIVKNYPEGHKAAAVLPVLDLAQRQNGWLPISAMNKVAEVLQVPPMRVYEVATFYTMYNRKPVGKYHIQVCTTTPCMLRNSDSILEAIQKKLGIKVGETTPDKLFTLIEVECLGACVNAPMVQINDNYYEDLTAKDIEEIIDELKAGKIPKPGPRSGRFSCEPAGGLTSLTEPPKGPGFGVQAGL.

A mitochondrion-targeting transit peptide spans 1 to 32; that stretch reads MFFSAALRARAAGLTAHWGRHVRNLHKTAKQN. Lys61 is modified (N6-acetyllysine). Residues Cys135, Cys140, Cys176, and Cys180 each coordinate [2Fe-2S] cluster. Tyr193 carries the post-translational modification Phosphotyrosine; by SRC. Positions 213–249 are disordered; sequence IPKPGPRSGRFSCEPAGGLTSLTEPPKGPGFGVQAGL.

This sequence belongs to the complex I 24 kDa subunit family. Core subunit of respiratory chain NADH dehydrogenase (Complex I) which is composed of 45 different subunits. This is a component of the flavoprotein-sulfur (FP) fragment of the enzyme. [2Fe-2S] cluster is required as a cofactor.

The protein localises to the mitochondrion inner membrane. The catalysed reaction is a ubiquinone + NADH + 5 H(+)(in) = a ubiquinol + NAD(+) + 4 H(+)(out). Its function is as follows. Core subunit of the mitochondrial membrane respiratory chain NADH dehydrogenase (Complex I) which catalyzes electron transfer from NADH through the respiratory chain, using ubiquinone as an electron acceptor. Parts of the peripheral arm of the enzyme, where the electrons from NADH are accepted by flavin mononucleotide (FMN) and then passed along a chain of iron-sulfur clusters by electron tunnelling to the final acceptor ubiquinone. Contains one iron-sulfur cluster. This chain is NADH dehydrogenase [ubiquinone] flavoprotein 2, mitochondrial, found in Pan troglodytes (Chimpanzee).